We begin with the raw amino-acid sequence, 100 residues long: Large ribosomal subunit protein bL28 (100 aa).

Positions methionine 1 to serine 25 are disordered. The segment covering serine 11–asparagine 22 has biased composition (polar residues).

Belongs to the bacterial ribosomal protein bL28 family.

The sequence is that of Large ribosomal subunit protein bL28 from Acidiphilium cryptum (strain JF-5).